A 78-amino-acid polypeptide reads, in one-letter code: Large ribosomal subunit protein bL28 (78 aa).

The tract at residues 1-21 (MSRVCQVTGKKPMVGNNRSHA) is disordered.

This sequence belongs to the bacterial ribosomal protein bL28 family.

This chain is Large ribosomal subunit protein bL28, found in Shewanella woodyi (strain ATCC 51908 / MS32).